We begin with the raw amino-acid sequence, 838 residues long: Envelope glycoprotein H (838 aa).

The first 18 residues, 1 to 18 (MGNGLWFVGVIILGVAWG), serve as a signal peptide directing secretion. At 19–803 (QVHDWTEQTD…DTQPVAAIAP (785 aa)) the chain is on the virion surface side. Residues Asn73 and Asn120 are each glycosylated (N-linked (GlcNAc...) asparagine; by host). The disordered stretch occupies residues 174–204 (FPRGDNVATASHPSGPRDTPPPRPPVGARRH). N-linked (GlcNAc...) asparagine; by host glycosylation occurs at Asn216. The interval 259 to 323 (DAALVRARYG…PGGPRYRVFV (65 aa)) is interaction with gL. Asn332, Asn437, Asn670, and Asn784 each carry an N-linked (GlcNAc...) asparagine; by host glycan. Residues 804–824 (GFLAASALGVVMITAALAGIL) form a helical membrane-spanning segment. Residues 825-838 (KVLRTSVPFFWRRE) are Intravirion-facing.

It belongs to the herpesviridae glycoprotein H family. As to quaternary structure, interacts with glycoprotein L (gL); this interaction is necessary for the correct processing and cell surface expression of gH. The heterodimer gH/gL seems to interact with gB trimers during fusion. Associates with the gB-gH/gL-gD complex. Interacts with VP16. N-glycosylated, O-glycosylated, and sialylated.

It localises to the virion membrane. The protein localises to the host cell membrane. The protein resides in the host endosome membrane. Functionally, the heterodimer glycoprotein H-glycoprotein L is required for the fusion of viral and plasma membranes leading to virus entry into the host cell. Following initial binding to host receptor, membrane fusion is mediated by the fusion machinery composed of gB and the heterodimer gH/gL. May also be involved in the fusion between the virion envelope and the outer nuclear membrane during virion morphogenesis. This is Envelope glycoprotein H from Human herpesvirus 1 (strain 17) (HHV-1).